The sequence spans 385 residues: UPF0496 protein At3g28290 (385 aa).

The stretch at 138 to 214 forms a coiled coil; sequence KDKENDVGKK…IEMEISSRKK (77 aa). 2 consecutive transmembrane segments (helical) span residues 217–237 and 242–262; these read IISN…SMVL and VGAG…IGWV. Residues 267–294 are a coiled coil; the sequence is ILENKIQAREKQEEALKKAHRIANEMDK.

Belongs to the UPF0496 family. Widely expressed.

The protein localises to the membrane. The polypeptide is UPF0496 protein At3g28290 (Arabidopsis thaliana (Mouse-ear cress)).